Consider the following 626-residue polypeptide: Chaperone protein HtpG (626 aa).

The tract at residues 1–339 (MSTNQETRGF…SNDLPLNVSR (339 aa)) is a; substrate-binding. Residues 340 to 555 (EILQDNKVTA…NDQMTTQMAK (216 aa)) are b. The segment at 556–626 (LFAAAGQPVP…FIKRVNNLLG (71 aa)) is c.

The protein belongs to the heat shock protein 90 family. In terms of assembly, homodimer.

The protein localises to the cytoplasm. In terms of biological role, molecular chaperone. Has ATPase activity. This Histophilus somni (strain 2336) (Haemophilus somnus) protein is Chaperone protein HtpG.